The primary structure comprises 69 residues: FXYD domain-containing ion transport regulator 11 (69 aa).

The first 22 residues, 1–22 (MSQLTELVLLTVFLALFSRAEA), serve as a signal peptide directing secretion. The Extracellular portion of the chain corresponds to 23-33 (NPFVYNYEALR). The helical transmembrane segment at 34-54 (IGGLVFTCVLVAGAVTALCWG) threads the bilayer. At 55-69 (QCKPKRKHDDDASKI) the chain is on the cytoplasmic side.

The protein belongs to the FXYD family. In terms of tissue distribution, detected in adult gill and in larval skin at 2 days post-fertilization (at protein level). In adult gill, strong expression is found in the basal regions of the secondary lamellae.

The protein resides in the cell membrane. In terms of biological role, may modulate the activity of a sodium/potassium-transporting ATPase. In Danio rerio (Zebrafish), this protein is FXYD domain-containing ion transport regulator 11.